The primary structure comprises 480 residues: Aspartyl/glutamyl-tRNA(Asn/Gln) amidotransferase subunit B (480 aa).

Belongs to the GatB/GatE family. GatB subfamily. Heterotrimer of A, B and C subunits.

The enzyme catalyses L-glutamyl-tRNA(Gln) + L-glutamine + ATP + H2O = L-glutaminyl-tRNA(Gln) + L-glutamate + ADP + phosphate + H(+). It carries out the reaction L-aspartyl-tRNA(Asn) + L-glutamine + ATP + H2O = L-asparaginyl-tRNA(Asn) + L-glutamate + ADP + phosphate + 2 H(+). In terms of biological role, allows the formation of correctly charged Asn-tRNA(Asn) or Gln-tRNA(Gln) through the transamidation of misacylated Asp-tRNA(Asn) or Glu-tRNA(Gln) in organisms which lack either or both of asparaginyl-tRNA or glutaminyl-tRNA synthetases. The reaction takes place in the presence of glutamine and ATP through an activated phospho-Asp-tRNA(Asn) or phospho-Glu-tRNA(Gln). This chain is Aspartyl/glutamyl-tRNA(Asn/Gln) amidotransferase subunit B, found in Streptococcus pneumoniae serotype 4 (strain ATCC BAA-334 / TIGR4).